The chain runs to 243 residues: NH(3)-dependent NAD(+) synthetase (243 aa).

Gly31–Ser38 serves as a coordination point for ATP. Position 37 (Asp37) interacts with Mg(2+). Arg116 provides a ligand contact to deamido-NAD(+). An ATP-binding site is contributed by Thr136. Residue Glu141 coordinates Mg(2+). The deamido-NAD(+) site is built by Lys149 and Asp156. ATP-binding residues include Lys165 and Ser187. His233 to Lys234 is a binding site for deamido-NAD(+).

It belongs to the NAD synthetase family. As to quaternary structure, homodimer.

It catalyses the reaction deamido-NAD(+) + NH4(+) + ATP = AMP + diphosphate + NAD(+) + H(+). Its pathway is cofactor biosynthesis; NAD(+) biosynthesis; NAD(+) from deamido-NAD(+) (ammonia route): step 1/1. Its function is as follows. Catalyzes the ATP-dependent amidation of deamido-NAD to form NAD. Uses ammonia as a nitrogen source. The sequence is that of NH(3)-dependent NAD(+) synthetase from Carboxydothermus hydrogenoformans (strain ATCC BAA-161 / DSM 6008 / Z-2901).